Reading from the N-terminus, the 202-residue chain is Large ribosomal subunit protein bL9 (202 aa).

The tract at residues 168–202 is disordered; it reads DEAGFTEDYDPNAEPGEIPTELQDEAPAAEATDEA. Residues 192–202 show a composition bias toward low complexity; sequence EAPAAEATDEA.

It belongs to the bacterial ribosomal protein bL9 family.

Binds to the 23S rRNA. This Rhizorhabdus wittichii (strain DSM 6014 / CCUG 31198 / JCM 15750 / NBRC 105917 / EY 4224 / RW1) (Sphingomonas wittichii) protein is Large ribosomal subunit protein bL9.